The sequence spans 178 residues: Cytochrome b6-f complex iron-sulfur subunit (178 aa).

A helical transmembrane segment spans residues 20-42 (LLTFGTATGVALGALYPVANYFM). Positions 65–161 (KTGWLATHQA…VDIEDDAVLV (97 aa)) constitute a Rieske domain. 4 residues coordinate [2Fe-2S] cluster: Cys107, His109, Cys125, and His128. A disulfide bridge connects residues Cys112 and Cys127.

This sequence belongs to the Rieske iron-sulfur protein family. In terms of assembly, the 4 large subunits of the cytochrome b6-f complex are cytochrome b6, subunit IV (17 kDa polypeptide, PetD), cytochrome f and the Rieske protein, while the 4 small subunits are PetG, PetL, PetM and PetN. The complex functions as a dimer. It depends on [2Fe-2S] cluster as a cofactor.

Its subcellular location is the cellular thylakoid membrane. The catalysed reaction is 2 oxidized [plastocyanin] + a plastoquinol + 2 H(+)(in) = 2 reduced [plastocyanin] + a plastoquinone + 4 H(+)(out). Component of the cytochrome b6-f complex, which mediates electron transfer between photosystem II (PSII) and photosystem I (PSI), cyclic electron flow around PSI, and state transitions. This Prochlorococcus marinus (strain MIT 9312) protein is Cytochrome b6-f complex iron-sulfur subunit.